The primary structure comprises 794 residues: Protein IQ-DOMAIN 32 (794 aa).

Positions 15–101 (CSGGDDTSAD…QSFSVDEKKS (87 aa)) are disordered. Composition is skewed to polar residues over residues 23 to 33 (ADPNSTALENK) and 56 to 65 (SVVSETTPAS). Phosphoserine is present on residues serine 78, serine 80, serine 142, serine 193, and serine 195. Over residues 80-95 (SPDNNNVSEKQQQSFS) the composition is skewed to polar residues. IQ domains follow at residues 214-242 (DESVIVVIQAAVRGFLARRELLRSKKVIK) and 243-265 (LQAAVRGHLVRSQAMGSLRCVQA). Residues 230 to 241 (ARRELLRSKKVI) form a calmodulin-binding region. The tract at residues 277–296 (HSTKDGSRVSATSDKSEPNA) is disordered. Serine 369 carries the post-translational modification Phosphoserine. Residues 375 to 417 (VNSDSTVENKTETDMPSYEASKVEGQNVELSETEKMSQYDSPE) are disordered. Phosphoserine is present on serine 459. Disordered regions lie at residues 472-555 (ELTS…RVEA) and 578-794 (ATSM…KWQR). The span at 473–486 (LTSSTGSNKAMTLS) shows a compositional bias: polar residues. Over residues 487-500 (SKDDVLGEEGKTDI) the composition is skewed to basic and acidic residues. 2 positions are modified to phosphoserine: serine 502 and serine 544. Composition is skewed to basic and acidic residues over residues 539–555 (TLEKKSDAEGAEPRVEA) and 585–607 (EDPKEKVENAKDEVEISATHHEP). Residues 643 to 654 (SQATPASQASSS) are compositionally biased toward low complexity. Residues 657–664 (ARKGKSEK) carry the Nuclear localization signal motif. Polar residues predominate over residues 768 to 786 (NGKQVSPRIQRSASQAQQG).

This sequence belongs to the IQD family. Binds to multiple calmodulin (CaM) in the presence of Ca(2+) and CaM-like proteins.

The protein localises to the nucleus. The protein resides in the cytoplasm. Its subcellular location is the cytoskeleton. May be involved in cooperative interactions with calmodulins or calmodulin-like proteins. Recruits calmodulin proteins to microtubules, thus being a potential scaffold in cellular signaling and trafficking. May associate with nucleic acids and regulate gene expression at the transcriptional or post-transcriptional level. The chain is Protein IQ-DOMAIN 32 from Arabidopsis thaliana (Mouse-ear cress).